Here is a 524-residue protein sequence, read N- to C-terminus: Fusicoccadiene C-8 hydroxylase (524 aa).

The chain crosses the membrane as a helical span at residues 16 to 36; that stretch reads LQLLCIGPLVYACVSFIIKIV. 2 N-linked (GlcNAc...) asparagine glycosylation sites follow: N126 and N344. C465 serves as a coordination point for heme. A glycan (N-linked (GlcNAc...) asparagine) is linked at N496.

It belongs to the cytochrome P450 family. Heme serves as cofactor.

The protein localises to the membrane. It participates in mycotoxin biosynthesis. Functionally, cytochrome P450 monooxygenase; part of the 2 gene clusters that mediate the biosynthesis of fusicoccins, diterpene glucosides that display phytohormone-like activity and function as potent activators of plasma membrane H(+)-ATPases in plants by modifying 14-3-3 proteins and cause the plant disease constriction canker. The first step in the pathway is performed by the fusicoccadiene synthase PaFS that possesses both prenyl transferase and terpene cyclase activity, converting isopentenyl diphosphate and dimethylallyl diphosphate into geranylgeranyl diphosphate (GGDP) and successively converting GGDP into fusicocca-2,10(14)-diene, a precursor for fusicoccin H. The second step is the oxidation at the C-8 position by the cytochrome P450 monooxygenase PaP450-2 to yield fusicocca-2,10(14)-diene-8-beta-ol. The cytochrome P450 monooxygenase PaP450-1 then catalyzes the hydroxylation at the C-16 position to produce fusicocca-2,10(14)-diene-8-beta,16-diol. The dioxygenase fc-dox then catalyzes the 16-oxydation of fusicocca-2,10(14)-diene-8-beta,16-diol to yield an aldehyde (8-beta-hydroxyfusicocca-1,10(14)-dien-16-al). The short-chain dehydrogenase/reductase fc-sdr catalyzes the reduction of the aldehyde to yield fusicocca-1,10(14)-diene-8-beta,16-diol. The next step is the hydroxylation at C-9 performed by the cytochrome P450 monooxygenase PaP450-3 that leads to fusicoccin H aglycon which is glycosylated to fusicoccin H by the O-glycosyltransferase PaGT. Hydroxylation at C-12 by the cytochrome P450 monooxygenase PaP450-4 leads then to the production of fusicoccin Q and is followed by methylation by the O-methyltransferase PaMT to yield fusicoccin P. Fusicoccin P is further converted to fusicoccin J via prenylation by the O-glucose prenyltransferase PaPT. Cytochrome P450 monooxygenase PaP450-5 then performs hydroxylation at C-19 to yield dideacetyl-fusicoccin A which is acetylated to 3'-O-deacetyl-fusicoccin A by the O-acetyltransferase PaAT-2. Finally, a another acetylation by the O-acetyltransferase PaAT-1 yields fusicoccin A. This chain is Fusicoccadiene C-8 hydroxylase, found in Phomopsis amygdali (Fusicoccum amygdali).